A 104-amino-acid polypeptide reads, in one-letter code: Pyrimidine/purine nucleoside phosphorylase (104 aa).

It belongs to the nucleoside phosphorylase PpnP family.

It catalyses the reaction a purine D-ribonucleoside + phosphate = a purine nucleobase + alpha-D-ribose 1-phosphate. The catalysed reaction is adenosine + phosphate = alpha-D-ribose 1-phosphate + adenine. The enzyme catalyses cytidine + phosphate = cytosine + alpha-D-ribose 1-phosphate. It carries out the reaction guanosine + phosphate = alpha-D-ribose 1-phosphate + guanine. It catalyses the reaction inosine + phosphate = alpha-D-ribose 1-phosphate + hypoxanthine. The catalysed reaction is thymidine + phosphate = 2-deoxy-alpha-D-ribose 1-phosphate + thymine. The enzyme catalyses uridine + phosphate = alpha-D-ribose 1-phosphate + uracil. It carries out the reaction xanthosine + phosphate = alpha-D-ribose 1-phosphate + xanthine. Functionally, catalyzes the phosphorolysis of diverse nucleosides, yielding D-ribose 1-phosphate and the respective free bases. Can use uridine, adenosine, guanosine, cytidine, thymidine, inosine and xanthosine as substrates. Also catalyzes the reverse reactions. The polypeptide is Pyrimidine/purine nucleoside phosphorylase (Janthinobacterium sp. (strain Marseille) (Minibacterium massiliensis)).